Consider the following 245-residue polypeptide: MSQSTSVLRRNGFTFKQFFVAHDRCAMKVGTDGILLGAWAPVAGVKRCLDIGAGSGLLALMLAQRTDDSVMIDAVELESEAATQAQENINQSPWAERINIYPADIQQWITQQTARFDLIISNPPYYQQGVECATPQREQARYTTTLDHQSLLTCAAECITEEGFFCVVLPEQIGNGFTELALRMGWHLRLRTDVAENETRQPHRVLLAFSPQAGECYSDRLVIRGPDQSYSEAYTALTQAFYLFM.

The protein belongs to the methyltransferase superfamily. tRNA (adenine-N(6)-)-methyltransferase family.

It is found in the cytoplasm. The enzyme catalyses adenosine(37) in tRNA1(Val) + S-adenosyl-L-methionine = N(6)-methyladenosine(37) in tRNA1(Val) + S-adenosyl-L-homocysteine + H(+). Functionally, specifically methylates the adenine in position 37 of tRNA(1)(Val) (anticodon cmo5UAC). This is tRNA1(Val) (adenine(37)-N6)-methyltransferase from Escherichia fergusonii (strain ATCC 35469 / DSM 13698 / CCUG 18766 / IAM 14443 / JCM 21226 / LMG 7866 / NBRC 102419 / NCTC 12128 / CDC 0568-73).